Here is a 62-residue protein sequence, read N- to C-terminus: Conotoxin Im11.9 (62 aa).

The N-terminal stretch at 1–22 (MFRVTSVLLVIVLLNLVVLTNA) is a signal peptide. 4 disulfide bridges follow: cysteine 23-cysteine 33, cysteine 27-cysteine 38, cysteine 32-cysteine 41, and cysteine 37-cysteine 46. A propeptide spanning residues 23-49 (CHMDCSKMTCCSGICCFYCGRPMCPGT) is cleaved from the precursor.

The protein belongs to the conotoxin I2 superfamily. As to expression, expressed by the venom duct.

It localises to the secreted. Functionally, probable neurotoxin. This is Conotoxin Im11.9 from Conus imperialis (Imperial cone).